The primary structure comprises 1061 residues: Eukaryotic translation initiation factor 3 subunit A (1061 aa).

Polar residues predominate over residues Gln114–Val126. The disordered stretch occupies residues Gln114–Glu133. The PCI domain maps to Leu339 to Phe523. 2 coiled-coil regions span residues Glu609–Asp724 and Arg789–Ala906. The segment covering Arg828–Lys901 has biased composition (basic and acidic residues). The tract at residues Arg828–Gly1061 is disordered. Pro residues-rich tracts occupy residues Ser950 to Ile962 and Ala1000 to Arg1011.

This sequence belongs to the eIF-3 subunit A family. Component of the eukaryotic translation initiation factor 3 (eIF-3) complex.

The protein localises to the cytoplasm. Its function is as follows. RNA-binding component of the eukaryotic translation initiation factor 3 (eIF-3) complex, which is involved in protein synthesis of a specialized repertoire of mRNAs and, together with other initiation factors, stimulates binding of mRNA and methionyl-tRNAi to the 40S ribosome. The eIF-3 complex specifically targets and initiates translation of a subset of mRNAs involved in cell proliferation. The chain is Eukaryotic translation initiation factor 3 subunit A from Chaetomium globosum (strain ATCC 6205 / CBS 148.51 / DSM 1962 / NBRC 6347 / NRRL 1970) (Soil fungus).